The chain runs to 739 residues: Sulfate transporter (739 aa).

Residues 1–27 form a disordered region; it reads MSSESKEQHNVSPRDSAEGNDSYPSGI. Residues S12 and S16 each carry the phosphoserine modification. Transmembrane regions (helical) follow at residues 112 to 132 and 137 to 157; these read VMSG…YSLL and PVYG…LGTS. 2 N-linked (GlcNAc...) asparagine glycosylation sites follow: N199 and N205. Transmembrane regions (helical) follow at residues 219–239 and 242–262; these read IMVG…MGFF and GFVS…GASF. N357 carries N-linked (GlcNAc...) asparagine glycosylation. The next 4 helical transmembrane spans lie at 378-398, 420-440, 455-475, and 524-544; these read LIPS…AITV, AIGF…SAAL, LSGV…APLF, and LLST…CVIL. In terms of domain architecture, STAS spans 568–719; the sequence is AYKNLQIKPG…YSVYEAMAFA (152 aa).

This sequence belongs to the SLC26A/SulP transporter (TC 2.A.53) family. In terms of processing, N-glycosylated. Ubiquitously expressed.

It localises to the cell membrane. It is found in the apical cell membrane. The enzyme catalyses oxalate(in) + sulfate(out) = oxalate(out) + sulfate(in). It catalyses the reaction sulfate(out) + 2 chloride(in) = sulfate(in) + 2 chloride(out). The catalysed reaction is oxalate(out) + 2 chloride(in) = oxalate(in) + 2 chloride(out). It carries out the reaction bromide(in) + chloride(out) = bromide(out) + chloride(in). The enzyme catalyses nitrate(in) + chloride(out) = nitrate(out) + chloride(in). It catalyses the reaction iodide(in) + chloride(out) = iodide(out) + chloride(in). With respect to regulation, an extracellular acidic pH inhibits chloride-sulfate and chloride-oxalate exchange activity whereas an intracellular acidic pH activates chloride-sulfate exchange with no effect on chloride-oxalate exchange activity. Functionally, sulfate transporter which mediates sulfate uptake into chondrocytes in order to maintain adequate sulfation of proteoglycans which is needed for cartilage development. Mediates electroneutral anion exchange of sulfate ions for oxalate ions and of sulfate and oxalate ions for chloride ions. Mediates exchange of sulfate and oxalate ions for hydroxyl ions and of chloride ions for bromide, iodide and nitrate ions. The coupling of sulfate transport to both hydroxyl and chloride ions likely serves to ensure transport at both acidic pH when most sulfate uptake is mediated by sulfate-hydroxide exchange and alkaline pH when most sulfate uptake is mediated by sulfate-chloride exchange. Essential for chondrocyte proliferation, differentiation and cell size expansion. The polypeptide is Sulfate transporter (SLC26A2) (Homo sapiens (Human)).